A 72-amino-acid chain; its full sequence is Putative snRNP Sm-like protein (72 aa).

The 69-residue stretch at 4 to 72 folds into the Sm domain; that stretch reads RPLDILNNAL…RGDNVVYVSP (69 aa).

This sequence belongs to the snRNP Sm proteins family.

This chain is Putative snRNP Sm-like protein, found in Methanosarcina acetivorans (strain ATCC 35395 / DSM 2834 / JCM 12185 / C2A).